The chain runs to 443 residues: Thymidine phosphorylase (443 aa).

The protein belongs to the thymidine/pyrimidine-nucleoside phosphorylase family. Homodimer.

It catalyses the reaction thymidine + phosphate = 2-deoxy-alpha-D-ribose 1-phosphate + thymine. The protein operates within pyrimidine metabolism; dTMP biosynthesis via salvage pathway; dTMP from thymine: step 1/2. Its function is as follows. The enzymes which catalyze the reversible phosphorolysis of pyrimidine nucleosides are involved in the degradation of these compounds and in their utilization as carbon and energy sources, or in the rescue of pyrimidine bases for nucleotide synthesis. This chain is Thymidine phosphorylase, found in Aeromonas salmonicida (strain A449).